A 211-amino-acid chain; its full sequence is MSTPSATVAPVKRIPYAEASRALLRDSVLDAMRDLLLTRDWSAITLSDVARAAGISRQTIYNEFGSRQGLAQGYALRLADRLVDNVHASLDANVGNFYEAFLQGFRSFFAESAADPLVISLLTGVAKPDLLQLITTDSAPIITRASARLAPAFTDTWVATTDNDANVLSRAIVRLCLSYVSMPPEADHDVAADLARLITPFAERHGVINVP.

In terms of domain architecture, HTH tetR-type spans 22–82; it reads ALLRDSVLDA…GYALRLADRL (61 aa). The H-T-H motif DNA-binding region spans 45–64; it reads TLSDVARAAGISRQTIYNEF.

Homodimer.

Its subcellular location is the cytoplasm. Its activity is regulated as follows. DNA-binding activity may be regulated by fatty acids. Functionally, represses the expression of the alkB-rubAB operon, which encodes the alkane hydroxylase AlkB and the rubredoxins RubA and RubB. Acts by binding to the promoter region of the operon. In addition, EMSA analysis show that AlkX can bind to the promoter region of mmpS1 and mmpL3 and to the intragenic region of mmpL11, suggesting that it may participate in the regulatory network that controls the expression of MmpL lipid transporters. In Mycobacterium tuberculosis (strain ATCC 25618 / H37Rv), this protein is HTH-type transcriptional regulator AlkX.